An 834-amino-acid chain; its full sequence is Glycerol-3-phosphate acyltransferase (834 aa).

The HXXXXD motif signature appears at 309-314 (CHRSHI).

The protein belongs to the GPAT/DAPAT family.

It localises to the cell inner membrane. The catalysed reaction is sn-glycerol 3-phosphate + an acyl-CoA = a 1-acyl-sn-glycero-3-phosphate + CoA. The protein operates within phospholipid metabolism; CDP-diacylglycerol biosynthesis; CDP-diacylglycerol from sn-glycerol 3-phosphate: step 1/3. The chain is Glycerol-3-phosphate acyltransferase from Pseudomonas aeruginosa (strain LESB58).